Consider the following 533-residue polypeptide: Retinoid isomerohydrolase (533 aa).

Serine 2 carries the post-translational modification N-acetylserine. Phosphothreonine is present on residues threonine 101 and threonine 105. Cysteine 112 is lipidated: S-palmitoyl cysteine; in membrane form. Lysine 113 carries the post-translational modification N6-acetyllysine. Residue serine 117 is modified to Phosphoserine. Histidine 180 provides a ligand contact to Fe cation. The S-palmitoyl cysteine; in membrane form moiety is linked to residue cysteine 231. Histidine 241 and histidine 313 together coordinate Fe cation. 2 S-palmitoyl cysteine; in membrane form lipidation sites follow: cysteine 329 and cysteine 330. Residue histidine 527 participates in Fe cation binding.

Belongs to the carotenoid oxygenase family. Interacts with MYO7A; this mediates light-dependent intracellular transport of RPE65. The cofactor is Fe(2+). Palmitoylation by LRAT regulates ligand binding specificity; the palmitoylated form (membrane form) specifically binds all-trans-retinyl-palmitate, while the soluble unpalmitoylated form binds all-trans-retinol (vitamin A). In terms of tissue distribution, retinal pigment epithelium specific.

The protein resides in the cytoplasm. The protein localises to the cell membrane. It localises to the microsome membrane. The enzyme catalyses an all-trans-retinyl ester + H2O = 11-cis-retinol + a fatty acid + H(+). The catalysed reaction is lutein = (3R,3'S)-zeaxanthin. It catalyses the reaction all-trans-retinyl hexadecanoate + H2O = 11-cis-retinol + hexadecanoate + H(+). Functionally, critical isomerohydrolase in the retinoid cycle involved in regeneration of 11-cis-retinal, the chromophore of rod and cone opsins. Catalyzes the cleavage and isomerization of all-trans-retinyl fatty acid esters to 11-cis-retinol which is further oxidized by 11-cis retinol dehydrogenase to 11-cis-retinal for use as visual chromophore. Essential for the production of 11-cis retinal for both rod and cone photoreceptors. Also capable of catalyzing the isomerization of lutein to meso-zeaxanthin an eye-specific carotenoid. The soluble form binds vitamin A (all-trans-retinol), making it available for LRAT processing to all-trans-retinyl ester. The membrane form, palmitoylated by LRAT, binds all-trans-retinyl esters, making them available for IMH (isomerohydrolase) processing to all-cis-retinol. The soluble form is regenerated by transferring its palmitoyl groups onto 11-cis-retinol, a reaction catalyzed by LRAT. The chain is Retinoid isomerohydrolase (Rpe65) from Mus musculus (Mouse).